Consider the following 273-residue polypeptide: Putative pyruvate, phosphate dikinase regulatory protein (273 aa).

149 to 156 lines the ADP pocket; that stretch reads GPSRTSKT.

It belongs to the pyruvate, phosphate/water dikinase regulatory protein family. PDRP subfamily.

It catalyses the reaction N(tele)-phospho-L-histidyl/L-threonyl-[pyruvate, phosphate dikinase] + ADP = N(tele)-phospho-L-histidyl/O-phospho-L-threonyl-[pyruvate, phosphate dikinase] + AMP + H(+). The enzyme catalyses N(tele)-phospho-L-histidyl/O-phospho-L-threonyl-[pyruvate, phosphate dikinase] + phosphate + H(+) = N(tele)-phospho-L-histidyl/L-threonyl-[pyruvate, phosphate dikinase] + diphosphate. Bifunctional serine/threonine kinase and phosphorylase involved in the regulation of the pyruvate, phosphate dikinase (PPDK) by catalyzing its phosphorylation/dephosphorylation. In Rickettsia bellii (strain OSU 85-389), this protein is Putative pyruvate, phosphate dikinase regulatory protein.